The chain runs to 314 residues: tRNA dimethylallyltransferase 1 (314 aa).

ATP is bound at residue 8-15 (GPTGSGKS). 10 to 15 (TGSGKS) contributes to the substrate binding site.

It belongs to the IPP transferase family. Monomer. Requires Mg(2+) as cofactor.

It catalyses the reaction adenosine(37) in tRNA + dimethylallyl diphosphate = N(6)-dimethylallyladenosine(37) in tRNA + diphosphate. Functionally, catalyzes the transfer of a dimethylallyl group onto the adenine at position 37 in tRNAs that read codons beginning with uridine, leading to the formation of N6-(dimethylallyl)adenosine (i(6)A). The protein is tRNA dimethylallyltransferase 1 of Mycobacterium ulcerans (strain Agy99).